The following is a 251-amino-acid chain: Small ribosomal subunit protein uS3 (251 aa).

The KH type-2 domain maps to 39-109; sequence IRNYVLARLK…EVKIDVVEVI (71 aa). Residues 221–239 show a composition bias toward basic and acidic residues; sequence EMKRMKDRRADSKSRPRDP. The interval 221-251 is disordered; the sequence is EMKRMKDRRADSKSRPRDPRSKRRRSRTKRA. A compositionally biased stretch (basic residues) spans 240 to 251; the sequence is RSKRRRSRTKRA.

This sequence belongs to the universal ribosomal protein uS3 family. As to quaternary structure, part of the 30S ribosomal subunit. Forms a tight complex with proteins S10 and S14.

Functionally, binds the lower part of the 30S subunit head. Binds mRNA in the 70S ribosome, positioning it for translation. This is Small ribosomal subunit protein uS3 from Chlorobium limicola (strain DSM 245 / NBRC 103803 / 6330).